We begin with the raw amino-acid sequence, 390 residues long: Methylthioribose-1-phosphate isomerase (390 aa).

Catalysis depends on Asp263, which acts as the Proton donor.

This sequence belongs to the eIF-2B alpha/beta/delta subunits family. MtnA subfamily.

The protein resides in the cytoplasm. The protein localises to the nucleus. It carries out the reaction 5-(methylsulfanyl)-alpha-D-ribose 1-phosphate = 5-(methylsulfanyl)-D-ribulose 1-phosphate. Its pathway is amino-acid biosynthesis; L-methionine biosynthesis via salvage pathway; L-methionine from S-methyl-5-thio-alpha-D-ribose 1-phosphate: step 1/6. Functionally, catalyzes the interconversion of methylthioribose-1-phosphate (MTR-1-P) into methylthioribulose-1-phosphate (MTRu-1-P). This chain is Methylthioribose-1-phosphate isomerase, found in Meyerozyma guilliermondii (strain ATCC 6260 / CBS 566 / DSM 6381 / JCM 1539 / NBRC 10279 / NRRL Y-324) (Yeast).